We begin with the raw amino-acid sequence, 238 residues long: uncharacterized protein (238 aa).

Residues 1–28 (MSRNSRGSGRYVFVVLACVFGYTRAVHA) form the signal peptide.

This is an uncharacterized protein from Treponema pallidum (strain Nichols).